Consider the following 74-residue polypeptide: uncharacterized protein (74 aa).

This is an uncharacterized protein from Saccharolobus islandicus (Sulfolobus islandicus).